The sequence spans 1187 residues: Myelin transcription factor 1-like protein (1187 aa).

The segment at 1 to 20 (MDVDAEEKRHRTRSKGVRVP) is disordered. The CCHHC-type 1 zinc-finger motif lies at 22–65 (EPAIQELFSCPTPGCDGSGHVSGKYARHRSVYGCPLAKKRKTQD). Zn(2+)-binding residues include Cys31, Cys36, His49, and Cys55. Disordered regions lie at residues 56-178 (PLAK…QMSC) and 221-248 (RTESEMNSNTSNSLEDDSDKNENLGRKS). Residues 89 to 172 (ECYESDGTED…EEEEEEEENE (84 aa)) show a composition bias toward acidic residues. The residue at position 251 (Ser251) is a Phosphoserine. 2 disordered regions span residues 343–422 (SETN…DRSE) and 450–509 (REKM…PTPG). Residues 344-358 (ETNPQDRSQPPNMSV) are compositionally biased toward polar residues. Basic and acidic residues-rich tracts occupy residues 362–377 (VRQEDDFPGRTPDRSY), 401–412 (AKEDGCHERDDD), and 450–504 (REKM…RESK). 2 CCHHC-type zinc fingers span residues 496 to 539 (SRTE…PPEI) and 540 to 583 (LAMH…KLAK). Cys505, Cys510, His523, Cys529, Cys549, Cys554, His567, and Cys573 together coordinate Zn(2+). Residues 684-708 (ASPSSSTTSSYAPSSSSNLSCGGGS) are disordered. CCHHC-type zinc fingers lie at residues 895–938 (LATS…GIRI), 944–987 (DKED…QKDG), and 997–1040 (KSVK…MKKA). The Zn(2+) site is built by Cys904, Cys909, His922, Cys928, Cys953, Cys958, His971, Cys977, Cys1006, Cys1011, His1024, and Cys1030. The stretch at 1055–1131 (SNGIENDEEI…LANLSQSLIH (77 aa)) forms a coiled coil.

Belongs to the MYT1 family. Interacts with SIN3B. Brain, testis and pituitary gland. Expression is higher in the brain than in the testis and pituitary gland. Highest level expression seen in the developing CNS.

It localises to the nucleus. It is found in the chromosome. In terms of biological role, transcription factor that plays a key role in neuronal differentiation. Acts by specifically repressing expression of non-neuronal genes during neuron differentiation. In contrast to other transcription repressors that inhibit specific lineages, mediates repression of multiple differentiation programs. Also represses expression of negative regulators of neurogenesis, such as members of the Notch signaling pathway, including HES1. The combination of three transcription factors, ASCL1, POU3F2/BRN2 and MYT1L, is sufficient to reprogram fibroblasts and other somatic cells into induced neuronal (iN) cells in vitro. Directly binds the 5'-AAGTT-3' core motif present on the promoter of target genes and represses transcription by recruiting a multiprotein complex containing SIN3B. The 5'-AAGTT-3' core motif is absent from the promoter of neural genes. This chain is Myelin transcription factor 1-like protein (Myt1l), found in Rattus norvegicus (Rat).